Consider the following 277-residue polypeptide: Shikimate dehydrogenase (NADP(+)) (277 aa).

Residues 18-20 (SKS) and T65 each bind shikimate. K69 acts as the Proton acceptor in catalysis. E81 contributes to the NADP(+) binding site. Residues N90 and D106 each coordinate shikimate. NADP(+)-binding positions include 130–134 (GAGGA), 154–159 (NRTFSK), and M217. Y219 is a shikimate binding site. Position 241 (G241) interacts with NADP(+).

It belongs to the shikimate dehydrogenase family. As to quaternary structure, homodimer.

It catalyses the reaction shikimate + NADP(+) = 3-dehydroshikimate + NADPH + H(+). It functions in the pathway metabolic intermediate biosynthesis; chorismate biosynthesis; chorismate from D-erythrose 4-phosphate and phosphoenolpyruvate: step 4/7. Involved in the biosynthesis of the chorismate, which leads to the biosynthesis of aromatic amino acids. Catalyzes the reversible NADPH linked reduction of 3-dehydroshikimate (DHSA) to yield shikimate (SA). In Vibrio parahaemolyticus serotype O3:K6 (strain RIMD 2210633), this protein is Shikimate dehydrogenase (NADP(+)).